Consider the following 341-residue polypeptide: N-acetyl-gamma-glutamyl-phosphate reductase (341 aa).

Cys-147 is a catalytic residue.

This sequence belongs to the NAGSA dehydrogenase family. Type 1 subfamily.

The protein localises to the cytoplasm. It catalyses the reaction N-acetyl-L-glutamate 5-semialdehyde + phosphate + NADP(+) = N-acetyl-L-glutamyl 5-phosphate + NADPH + H(+). Its pathway is amino-acid biosynthesis; L-arginine biosynthesis; N(2)-acetyl-L-ornithine from L-glutamate: step 3/4. In terms of biological role, catalyzes the NADPH-dependent reduction of N-acetyl-5-glutamyl phosphate to yield N-acetyl-L-glutamate 5-semialdehyde. This chain is N-acetyl-gamma-glutamyl-phosphate reductase, found in Dehalococcoides mccartyi (strain ATCC BAA-2100 / JCM 16839 / KCTC 5957 / BAV1).